A 343-amino-acid polypeptide reads, in one-letter code: Probable dual-specificity RNA methyltransferase RlmN (343 aa).

Catalysis depends on Glu-91, which acts as the Proton acceptor. A Radical SAM core domain is found at 97–326 (HPDRITACIS…AEIRREKGTD (230 aa)). Cys-104 and Cys-331 form a disulfide bridge. [4Fe-4S] cluster is bound by residues Cys-111, Cys-115, and Cys-118. Residues 158 to 159 (GE), Ser-190, 213 to 215 (SLH), and Asn-289 contribute to the S-adenosyl-L-methionine site. Cys-331 (S-methylcysteine intermediate) is an active-site residue.

Belongs to the radical SAM superfamily. RlmN family. [4Fe-4S] cluster is required as a cofactor.

It localises to the cytoplasm. It catalyses the reaction adenosine(2503) in 23S rRNA + 2 reduced [2Fe-2S]-[ferredoxin] + 2 S-adenosyl-L-methionine = 2-methyladenosine(2503) in 23S rRNA + 5'-deoxyadenosine + L-methionine + 2 oxidized [2Fe-2S]-[ferredoxin] + S-adenosyl-L-homocysteine. The catalysed reaction is adenosine(37) in tRNA + 2 reduced [2Fe-2S]-[ferredoxin] + 2 S-adenosyl-L-methionine = 2-methyladenosine(37) in tRNA + 5'-deoxyadenosine + L-methionine + 2 oxidized [2Fe-2S]-[ferredoxin] + S-adenosyl-L-homocysteine. Functionally, specifically methylates position 2 of adenine 2503 in 23S rRNA and position 2 of adenine 37 in tRNAs. The polypeptide is Probable dual-specificity RNA methyltransferase RlmN (Thermotoga maritima (strain ATCC 43589 / DSM 3109 / JCM 10099 / NBRC 100826 / MSB8)).